A 452-amino-acid chain; its full sequence is Lichenan permease IIC component (452 aa).

Positions 8 to 421 (LEEKVMPIAG…AVSFVVYYPF (414 aa)) constitute a PTS EIIC type-3 domain. The next 10 membrane-spanning stretches (helical) occupy residues 31–51 (GIIL…IGNL), 72–92 (LAYP…FGIA), 104–124 (LSAG…QVPF), 138–158 (GIPL…IAMV), 187–207 (FVAL…RLIV), 218–238 (IVSV…GGSL), 246–266 (LLWA…APIW), 291–311 (FFDI…VVTM), 351–373 (LLLP…MSTG), and 402–422 (SGAV…YPFF).

The protein resides in the cell membrane. In terms of biological role, the phosphoenolpyruvate-dependent sugar phosphotransferase system (PTS), a major carbohydrate active -transport system, catalyzes the phosphorylation of incoming sugar substrates concomitant with their translocation across the cell membrane. This system is involved in lichenan transport. This Bacillus subtilis (strain 168) protein is Lichenan permease IIC component (licC).